The chain runs to 200 residues: GTP cyclohydrolase-2 (200 aa).

50–54 contacts GTP; it reads RVHSE. Zn(2+) contacts are provided by cysteine 55, cysteine 66, and cysteine 68. GTP is bound by residues glutamine 71, 93-95, and threonine 115; that span reads EGR. The active-site Proton acceptor is the aspartate 127. Arginine 129 serves as the catalytic Nucleophile. GTP is bound by residues threonine 150 and lysine 155.

The protein belongs to the GTP cyclohydrolase II family. Requires Zn(2+) as cofactor.

It carries out the reaction GTP + 4 H2O = 2,5-diamino-6-hydroxy-4-(5-phosphoribosylamino)-pyrimidine + formate + 2 phosphate + 3 H(+). It functions in the pathway cofactor biosynthesis; riboflavin biosynthesis; 5-amino-6-(D-ribitylamino)uracil from GTP: step 1/4. In terms of biological role, catalyzes the conversion of GTP to 2,5-diamino-6-ribosylamino-4(3H)-pyrimidinone 5'-phosphate (DARP), formate and pyrophosphate. In Acinetobacter baumannii (strain AB0057), this protein is GTP cyclohydrolase-2.